Reading from the N-terminus, the 224-residue chain is Redox-sensing transcriptional repressor Rex (224 aa).

The H-T-H motif DNA-binding region spans 17 to 56 (RYHRCLEELLKNDIKRISSKELSERMGVTASQIRQDLNNF). Residue 91–96 (GAGNLG) coordinates NAD(+).

The protein belongs to the transcriptional regulatory Rex family. Homodimer.

It is found in the cytoplasm. Its function is as follows. Modulates transcription in response to changes in cellular NADH/NAD(+) redox state. The polypeptide is Redox-sensing transcriptional repressor Rex (Caldanaerobacter subterraneus subsp. tengcongensis (strain DSM 15242 / JCM 11007 / NBRC 100824 / MB4) (Thermoanaerobacter tengcongensis)).